A 48-amino-acid polypeptide reads, in one-letter code: MPQLVPFYFLNQLVYGFALVTILLVLFAQYFLPQILRLYVSRLFISKL.

Residues 13 to 32 traverse the membrane as a helical segment; sequence LVYGFALVTILLVLFAQYFL.

Belongs to the ATPase protein 8 family. As to quaternary structure, F-type ATPases have 2 components, CF(1) - the catalytic core - and CF(0) - the membrane proton channel.

Its subcellular location is the mitochondrion membrane. In terms of biological role, mitochondrial membrane ATP synthase (F(1)F(0) ATP synthase or Complex V) produces ATP from ADP in the presence of a proton gradient across the membrane which is generated by electron transport complexes of the respiratory chain. F-type ATPases consist of two structural domains, F(1) - containing the extramembraneous catalytic core and F(0) - containing the membrane proton channel, linked together by a central stalk and a peripheral stalk. During catalysis, ATP synthesis in the catalytic domain of F(1) is coupled via a rotary mechanism of the central stalk subunits to proton translocation. Part of the complex F(0) domain. Minor subunit located with subunit a in the membrane. This is ATP synthase protein 8 (ATP8) from Kluyveromyces lactis (strain ATCC 8585 / CBS 2359 / DSM 70799 / NBRC 1267 / NRRL Y-1140 / WM37) (Yeast).